A 398-amino-acid polypeptide reads, in one-letter code: Acetate kinase (398 aa).

Asparagine 10 provides a ligand contact to Mg(2+). Lysine 17 lines the ATP pocket. Arginine 91 contributes to the substrate binding site. Aspartate 148 functions as the Proton donor/acceptor in the catalytic mechanism. Residues 208–212 (HLGNG), 283–285 (DCR), and 331–335 (GIGEN) contribute to the ATP site. Position 385 (glutamate 385) interacts with Mg(2+).

It belongs to the acetokinase family. As to quaternary structure, homodimer. Mg(2+) serves as cofactor. Mn(2+) is required as a cofactor.

The protein resides in the cytoplasm. It catalyses the reaction acetate + ATP = acetyl phosphate + ADP. Its pathway is metabolic intermediate biosynthesis; acetyl-CoA biosynthesis; acetyl-CoA from acetate: step 1/2. Functionally, catalyzes the formation of acetyl phosphate from acetate and ATP. Can also catalyze the reverse reaction. This chain is Acetate kinase, found in Shewanella woodyi (strain ATCC 51908 / MS32).